The primary structure comprises 437 residues: Probable exopolygalacturonase C (437 aa).

Residues 1 to 21 (MLITKTAFLAFLLSSVPLAHG) form the signal peptide. N-linked (GlcNAc...) asparagine glycosylation is found at Asn-25, Asn-42, Asn-82, Asn-99, and Asn-149. PbH1 repeat units follow at residues 215–236 (GTNI…AVGS) and 238–259 (SHNI…SIGS). Asp-229 acts as the Proton donor in catalysis. His-253 is an active-site residue. Asn-269 is a glycosylation site (N-linked (GlcNAc...) asparagine). PbH1 repeat units follow at residues 270–291 (ITNL…RFKS) and 299–320 (VKNV…FVTQ). 2 N-linked (GlcNAc...) asparagine glycosylation sites follow: Asn-301 and Asn-311. Cys-386 and Cys-392 are disulfide-bonded. 2 N-linked (GlcNAc...) asparagine glycosylation sites follow: Asn-428 and Asn-431.

This sequence belongs to the glycosyl hydrolase 28 family.

It localises to the secreted. The enzyme catalyses [(1-&gt;4)-alpha-D-galacturonosyl](n) + H2O = alpha-D-galacturonate + [(1-&gt;4)-alpha-D-galacturonosyl](n-1). Functionally, specific in hydrolyzing the terminal glycosidic bond of polygalacturonic acid and oligogalacturonates. In Aspergillus flavus (strain ATCC 200026 / FGSC A1120 / IAM 13836 / NRRL 3357 / JCM 12722 / SRRC 167), this protein is Probable exopolygalacturonase C (pgxC).